The following is a 158-amino-acid chain: Low molecular weight phosphotyrosine protein phosphatase (158 aa).

Ala2 is modified (N-acetylalanine). Catalysis depends on Cys13, which acts as the Nucleophile. Arg19 is a catalytic residue. Residue Asp130 is the Proton donor of the active site. 2 positions are modified to phosphotyrosine: Tyr132 and Tyr133.

This sequence belongs to the low molecular weight phosphotyrosine protein phosphatase family. In terms of assembly, interacts with EPHA2; dephosphorylates EPHA2. Interacts with EPHB1. Interacts with the SH3 domain of SPTAN1. Post-translationally, phosphorylated by LCK. Phosphorylation at Tyr-132 increases its phosphatase activity.

It is found in the cytoplasm. The enzyme catalyses O-phospho-L-tyrosyl-[protein] + H2O = L-tyrosyl-[protein] + phosphate. It catalyses the reaction a phosphate monoester + H2O = an alcohol + phosphate. Inhibited by sulfhydryl reagents. In terms of biological role, acts on tyrosine phosphorylated proteins, low-MW aryl phosphates and natural and synthetic acyl phosphates with differences in substrate specificity between isoform 1 and isoform 2. This chain is Low molecular weight phosphotyrosine protein phosphatase (ACP1), found in Pongo abelii (Sumatran orangutan).